Here is a 251-residue protein sequence, read N- to C-terminus: Anamorsin homolog (251 aa).

Positions 1–154 (MINFSNTLVI…AENPDFNKSD (154 aa)) are N-terminal SAM-like domain. Positions 155-167 (DDNNLVSSDEEIY) are linker. Residues C170, C181, C184, and C186 each contribute to the [2Fe-2S] cluster site. The fe-S binding site A stretch occupies residues 170–186 (CEDKKKVVNRVCDNCTC). [4Fe-4S] cluster-binding residues include C216, C219, C227, and C230. 2 consecutive short sequence motifs (cx2C motif) follow at residues 216–219 (CGNC) and 227–230 (CGSC). The interval 216–230 (CGNCYLGDAFRCGSC) is fe-S binding site B.

The protein belongs to the anamorsin family. In terms of assembly, monomer. It depends on [2Fe-2S] cluster as a cofactor. [4Fe-4S] cluster serves as cofactor.

The protein localises to the cytoplasm. The protein resides in the mitochondrion intermembrane space. Component of the cytosolic iron-sulfur (Fe-S) protein assembly (CIA) machinery. Required for the maturation of extramitochondrial Fe-S proteins. Part of an electron transfer chain functioning in an early step of cytosolic Fe-S biogenesis, facilitating the de novo assembly of a [4Fe-4S] cluster on the cytosolic Fe-S scaffold complex. Electrons are transferred from NADPH via a FAD- and FMN-containing diflavin oxidoreductase. Together with the diflavin oxidoreductase, also required for the assembly of the diferric tyrosyl radical cofactor of ribonucleotide reductase (RNR), probably by providing electrons for reduction during radical cofactor maturation in the catalytic small subunit. The protein is Anamorsin homolog of Plasmodium yoelii yoelii.